The sequence spans 215 residues: MGVRAQQKEKTRRSLVEAAFSQLSAERSFASLSLREVAREAGIAPTSFYRHFRDVDELGLTMVDESGLMLRQLMRQARQRIAKGGSVIRTSVSTFMEFIGNNPNAFRLLLRERSGTSAAFRAAVAREIQHFIAELADYLELENHMPRAFTEAQAEAMVTIVFSAGAEALDVGVEQRRQLEERLVLQLRMISKGAYYWYRREQEKTAIIPGNVKDE.

The HTH tetR-type domain occupies 10 to 70 (KTRRSLVEAA…TMVDESGLML (61 aa)). The H-T-H motif DNA-binding region spans 33-52 (SLREVAREAGIAPTSFYRHF).

As to quaternary structure, homodimer.

It is found in the cytoplasm. Represses the transcription of fabB, involved in unsaturated fatty acid (UFA) biosynthesis. By controlling UFA production, FabR directly influences the physical properties of the membrane bilayer. This Escherichia coli O139:H28 (strain E24377A / ETEC) protein is HTH-type transcriptional repressor FabR.